The following is a 319-amino-acid chain: Ribonuclease Z (319 aa).

Zn(2+)-binding residues include histidine 62, histidine 64, aspartate 66, histidine 67, histidine 145, aspartate 216, and histidine 274. The active-site Proton acceptor is the aspartate 66.

The protein belongs to the RNase Z family. In terms of assembly, homodimer. The cofactor is Zn(2+).

The catalysed reaction is Endonucleolytic cleavage of RNA, removing extra 3' nucleotides from tRNA precursor, generating 3' termini of tRNAs. A 3'-hydroxy group is left at the tRNA terminus and a 5'-phosphoryl group is left at the trailer molecule.. Zinc phosphodiesterase, which displays some tRNA 3'-processing endonuclease activity. Probably involved in tRNA maturation, by removing a 3'-trailer from precursor tRNA. The chain is Ribonuclease Z from Parasynechococcus marenigrum (strain WH8102).